A 265-amino-acid polypeptide reads, in one-letter code: 2-C-methyl-D-erythritol 4-phosphate cytidylyltransferase (265 aa).

Basic and acidic residues predominate over residues 231 to 241; that stretch reads DRGGASREAER. Residues 231–265 are disordered; that stretch reads DRGGASREAERSAMPSAATSVFSGARSAASGSEEV. Low complexity predominate over residues 253-265; that stretch reads SGARSAASGSEEV.

Belongs to the IspD/TarI cytidylyltransferase family. IspD subfamily.

It catalyses the reaction 2-C-methyl-D-erythritol 4-phosphate + CTP + H(+) = 4-CDP-2-C-methyl-D-erythritol + diphosphate. It participates in isoprenoid biosynthesis; isopentenyl diphosphate biosynthesis via DXP pathway; isopentenyl diphosphate from 1-deoxy-D-xylulose 5-phosphate: step 2/6. Its function is as follows. Catalyzes the formation of 4-diphosphocytidyl-2-C-methyl-D-erythritol from CTP and 2-C-methyl-D-erythritol 4-phosphate (MEP). This chain is 2-C-methyl-D-erythritol 4-phosphate cytidylyltransferase, found in Xanthomonas campestris pv. campestris (strain 8004).